The chain runs to 257 residues: Pimeloyl-[acyl-carrier protein] methyl ester esterase (257 aa).

The AB hydrolase-1 domain occupies 16–240 (LVLIHGWGMN…EQASHAPFIS (225 aa)). Substrate contacts are provided by residues Trp22, 82–83 (SL), and 143–147 (FMALQ). The active-site Nucleophile is Ser82. Residues Asp207 and His235 contribute to the active site. Substrate is bound at residue His235.

It belongs to the AB hydrolase superfamily. Carboxylesterase BioH family. Monomer.

The protein localises to the cytoplasm. It carries out the reaction 6-carboxyhexanoyl-[ACP] methyl ester + H2O = 6-carboxyhexanoyl-[ACP] + methanol + H(+). The protein operates within cofactor biosynthesis; biotin biosynthesis. Its function is as follows. The physiological role of BioH is to remove the methyl group introduced by BioC when the pimeloyl moiety is complete. It allows to synthesize pimeloyl-ACP via the fatty acid synthetic pathway through the hydrolysis of the ester bonds of pimeloyl-ACP esters. This is Pimeloyl-[acyl-carrier protein] methyl ester esterase from Aliivibrio fischeri (strain MJ11) (Vibrio fischeri).